We begin with the raw amino-acid sequence, 390 residues long: 1-deoxy-D-xylulose 5-phosphate reductoisomerase (390 aa).

The NADPH site is built by Thr10, Gly11, Ser12, Ile13, Gly36, Arg37, Asn38, and Asn121. Lys122 is a binding site for 1-deoxy-D-xylulose 5-phosphate. Residue Glu123 coordinates NADPH. Asp147 is a binding site for Mn(2+). The 1-deoxy-D-xylulose 5-phosphate site is built by Ser148, Glu149, Ser173, and His196. Glu149 contacts Mn(2+). An NADPH-binding site is contributed by Gly202. 4 residues coordinate 1-deoxy-D-xylulose 5-phosphate: Ser209, Asn214, Lys215, and Glu218. Residue Glu218 participates in Mn(2+) binding. The disordered stretch occupies residues 367–390 (AASEHGRREAEKRVGARAHAPASR). A compositionally biased stretch (basic and acidic residues) spans 370-380 (EHGRREAEKRV).

It belongs to the DXR family. The cofactor is Mg(2+). Mn(2+) serves as cofactor.

It carries out the reaction 2-C-methyl-D-erythritol 4-phosphate + NADP(+) = 1-deoxy-D-xylulose 5-phosphate + NADPH + H(+). Its pathway is isoprenoid biosynthesis; isopentenyl diphosphate biosynthesis via DXP pathway; isopentenyl diphosphate from 1-deoxy-D-xylulose 5-phosphate: step 1/6. In terms of biological role, catalyzes the NADPH-dependent rearrangement and reduction of 1-deoxy-D-xylulose-5-phosphate (DXP) to 2-C-methyl-D-erythritol 4-phosphate (MEP). This chain is 1-deoxy-D-xylulose 5-phosphate reductoisomerase, found in Anaeromyxobacter dehalogenans (strain 2CP-1 / ATCC BAA-258).